Reading from the N-terminus, the 284-residue chain is Pantothenate synthetase (284 aa).

Residue 30–37 coordinates ATP; sequence MGNLHDGH. His-37 serves as the catalytic Proton donor. Residue Gln-61 coordinates (R)-pantoate. Residue Gln-61 participates in beta-alanine binding. Position 149 to 152 (149 to 152) interacts with ATP; the sequence is GEKD. Gln-155 is a (R)-pantoate binding site. ATP contacts are provided by residues Ile-178 and 186–189; that span reads LSSR.

The protein belongs to the pantothenate synthetase family. Homodimer.

The protein resides in the cytoplasm. It carries out the reaction (R)-pantoate + beta-alanine + ATP = (R)-pantothenate + AMP + diphosphate + H(+). It functions in the pathway cofactor biosynthesis; (R)-pantothenate biosynthesis; (R)-pantothenate from (R)-pantoate and beta-alanine: step 1/1. Catalyzes the condensation of pantoate with beta-alanine in an ATP-dependent reaction via a pantoyl-adenylate intermediate. This is Pantothenate synthetase from Salmonella typhi.